Consider the following 432-residue polypeptide: Glutamyl-tRNA reductase (432 aa).

Residues 55–58, Ser-114, 119–121, and Gln-125 each bind substrate; these read TCNR and ETQ. The Nucleophile role is filled by Cys-56. Residue 194-199 coordinates NADP(+); that stretch reads GAGEMI.

Belongs to the glutamyl-tRNA reductase family. As to quaternary structure, homodimer.

It carries out the reaction (S)-4-amino-5-oxopentanoate + tRNA(Glu) + NADP(+) = L-glutamyl-tRNA(Glu) + NADPH + H(+). The protein operates within porphyrin-containing compound metabolism; protoporphyrin-IX biosynthesis; 5-aminolevulinate from L-glutamyl-tRNA(Glu): step 1/2. Functionally, catalyzes the NADPH-dependent reduction of glutamyl-tRNA(Glu) to glutamate 1-semialdehyde (GSA). This Burkholderia pseudomallei (strain 1710b) protein is Glutamyl-tRNA reductase.